Here is a 417-residue protein sequence, read N- to C-terminus: Lactose permease (417 aa).

Methionine 1 carries the post-translational modification N-formylmethionine; partial. Over methionine 1–threonine 7 the chain is Cytoplasmic. Residues asparagine 8 to leucine 34 traverse the membrane as a helical segment. Residues histidine 35–serine 41 are Periplasmic-facing. Residues lysine 42–leucine 70 traverse the membrane as a helical segment. Residues glycine 71–lysine 74 lie on the Cytoplasmic side of the membrane. The chain crosses the membrane as a helical span at residues tyrosine 75–glutamine 100. At tyrosine 101 to leucine 104 the chain is on the periplasmic side. Residues valine 105–isoleucine 129 traverse the membrane as a helical segment. Residues glutamate 130 to phenylalanine 140 are Cytoplasmic-facing. The chain crosses the membrane as a helical span at residues glycine 141–threonine 163. Residues isoleucine 164 to asparagine 166 lie on the Periplasmic side of the membrane. Residues glutamine 167–phenylalanine 186 form a helical membrane-spanning segment. Topologically, residues alanine 187–proline 220 are cytoplasmic. Residues lysine 221–serine 249 form a helical membrane-spanning segment. The Periplasmic portion of the chain corresponds to phenylalanine 250–threonine 253. A helical membrane pass occupies residues glycine 254 to phenylalanine 278. The Cytoplasmic segment spans residues alanine 279–glycine 288. A helical membrane pass occupies residues lysine 289–phenylalanine 308. Residues alanine 309–serine 311 lie on the Periplasmic side of the membrane. Residues alanine 312–phenylalanine 334 form a helical membrane-spanning segment. Residues lysine 335–serine 346 lie on the Cytoplasmic side of the membrane. The chain crosses the membrane as a helical span at residues alanine 347 to glutamate 374. The Periplasmic portion of the chain corresponds to serine 375–glycine 377. The chain crosses the membrane as a helical span at residues phenylalanine 378 to phenylalanine 398. The Cytoplasmic portion of the chain corresponds to threonine 399–alanine 417.

In terms of assembly, monomer.

It localises to the cell inner membrane. The catalysed reaction is lactose(in) + H(+)(in) = lactose(out) + H(+)(out). The enzyme catalyses melibiose(in) + H(+)(in) = melibiose(out) + H(+)(out). Inhibited by the proton ionophore carbonyl cyanide m-chlorophenylhydrazone (CCCP). In terms of biological role, responsible for transport of beta-galactosides into the cell, with the concomitant import of a proton (symport system). Can transport lactose, melibiose, the synthetic disaccharide lactulose or the analog methyl-1-thio-beta,D-galactopyranoside (TMG), but not sucrose or fructose. The substrate specificity is directed toward the galactopyranosyl moiety of the substrate. In Escherichia coli (strain K12), this protein is Lactose permease.